Here is a 315-residue protein sequence, read N- to C-terminus: MTTMQLDSDGRLRHLLTLEGVPRTTLLQLLDRAGQIRDAAVGRVGKRSVLAGTAVCTLFFEPSTRTRSSFHLAAQRLGADVLNFDASTSSTRKGETARDTLKNLEAMGVRGFVVRHPDDGAVKALAAAAGEGTALINAGDGRSAHPTQGLLDMLTLRQAKGTDFSKLKVVIVGDVKHSRVARSDLHALRTLGAGEIRVCGPASLLPDDGILEGCVVGQDFDAMLEGADALMMLRLQRERMEEGLVPSLEQYHTEYGLTRERLARAGHDAAVLHPGPINRGVEITDEVADGAQSCVLRQVANGVAVRMAVLETLLG.

Arginine 65 and threonine 66 together coordinate carbamoyl phosphate. Lysine 93 contacts L-aspartate. Residues arginine 115, histidine 145, and glutamine 148 each coordinate carbamoyl phosphate. Residues arginine 179 and arginine 234 each contribute to the L-aspartate site. The carbamoyl phosphate site is built by glycine 275 and proline 276.

Belongs to the aspartate/ornithine carbamoyltransferase superfamily. ATCase family. In terms of assembly, heterododecamer (2C3:3R2) of six catalytic PyrB chains organized as two trimers (C3), and six regulatory PyrI chains organized as three dimers (R2).

It catalyses the reaction carbamoyl phosphate + L-aspartate = N-carbamoyl-L-aspartate + phosphate + H(+). It participates in pyrimidine metabolism; UMP biosynthesis via de novo pathway; (S)-dihydroorotate from bicarbonate: step 2/3. In terms of biological role, catalyzes the condensation of carbamoyl phosphate and aspartate to form carbamoyl aspartate and inorganic phosphate, the committed step in the de novo pyrimidine nucleotide biosynthesis pathway. The polypeptide is Aspartate carbamoyltransferase catalytic subunit (Xanthomonas oryzae pv. oryzae (strain MAFF 311018)).